The following is a 161-amino-acid chain: Protein shisa-like-2B (161 aa).

Residues 65 to 85 form a helical membrane-spanning segment; that stretch reads IGALIGLGIAALVLLAFVISV. The segment at 115–134 is disordered; sequence QEGNSNRKSKAPRSNAASNS.

This sequence belongs to the shisa family.

Its subcellular location is the membrane. In Bos taurus (Bovine), this protein is Protein shisa-like-2B (SHISAL2B).